The following is a 491-amino-acid chain: UDP-N-acetylmuramate--L-alanine ligase (491 aa).

126-132 (GTHGKTT) is an ATP binding site.

This sequence belongs to the MurCDEF family.

Its subcellular location is the cytoplasm. It carries out the reaction UDP-N-acetyl-alpha-D-muramate + L-alanine + ATP = UDP-N-acetyl-alpha-D-muramoyl-L-alanine + ADP + phosphate + H(+). It participates in cell wall biogenesis; peptidoglycan biosynthesis. Functionally, cell wall formation. The polypeptide is UDP-N-acetylmuramate--L-alanine ligase (Escherichia coli O1:K1 / APEC).